We begin with the raw amino-acid sequence, 342 residues long: Succinylglutamate desuccinylase (342 aa).

Zn(2+) is bound by residues His-64, Glu-67, and His-159. The active site involves Glu-222.

This sequence belongs to the AspA/AstE family. Succinylglutamate desuccinylase subfamily. Requires Zn(2+) as cofactor.

It catalyses the reaction N-succinyl-L-glutamate + H2O = L-glutamate + succinate. The protein operates within amino-acid degradation; L-arginine degradation via AST pathway; L-glutamate and succinate from L-arginine: step 5/5. In terms of biological role, transforms N(2)-succinylglutamate into succinate and glutamate. In Burkholderia orbicola (strain MC0-3), this protein is Succinylglutamate desuccinylase.